The sequence spans 150 residues: Large ribosomal subunit protein bL9 (150 aa).

It belongs to the bacterial ribosomal protein bL9 family.

In terms of biological role, binds to the 23S rRNA. The chain is Large ribosomal subunit protein bL9 from Yersinia pseudotuberculosis serotype I (strain IP32953).